The following is an 89-amino-acid chain: Small ribosomal subunit protein uS15 (89 aa).

The protein belongs to the universal ribosomal protein uS15 family. As to quaternary structure, part of the 30S ribosomal subunit. Forms a bridge to the 50S subunit in the 70S ribosome, contacting the 23S rRNA.

One of the primary rRNA binding proteins, it binds directly to 16S rRNA where it helps nucleate assembly of the platform of the 30S subunit by binding and bridging several RNA helices of the 16S rRNA. Its function is as follows. Forms an intersubunit bridge (bridge B4) with the 23S rRNA of the 50S subunit in the ribosome. The protein is Small ribosomal subunit protein uS15 of Bdellovibrio bacteriovorus (strain ATCC 15356 / DSM 50701 / NCIMB 9529 / HD100).